Consider the following 323-residue polypeptide: Prenyl transferase (323 aa).

Lys46, Arg49, and His81 together coordinate isopentenyl diphosphate. Residues Asp88 and Asp92 each contribute to the Mg(2+) site. Residue Arg97 coordinates an all-trans-polyprenyl diphosphate. An isopentenyl diphosphate-binding site is contributed by Arg98. An all-trans-polyprenyl diphosphate-binding residues include Lys174, Thr175, and Gln212.

It belongs to the FPP/GGPP synthase family. Mg(2+) serves as cofactor.

Its function is as follows. Possible role in synthesis of the nonaprenyl side chain of plastoquinone or in synthesis of other prenyl chains such as undekaprenyl pyrophosphate. This chain is Prenyl transferase (preA), found in Synechocystis sp. (strain ATCC 27184 / PCC 6803 / Kazusa).